A 426-amino-acid polypeptide reads, in one-letter code: Crinkler effector protein 4 (426 aa).

The segment at 20-57 (VEIDDSAKVSKLKKVIKEENPATITCDAKDLQLFLAKK) is LQLFLAK domain. Residues 59–107 (DAWLDGAGAAAVELDEHGHPQGCVQMDPTLWVKNPKHFGDNFQPGEGQV) are DWL domain. Positions 108–114 (HVLVVVP) match the HVLVXXP motif motif. The segment at 115–426 (EGVVGSASET…RSIPTLSYFS (312 aa)) is effector domain.

The protein belongs to the Crinkler effector family.

It is found in the secreted. The protein resides in the host nucleus. Its function is as follows. Secreted effector that is critical to pathogenesis by suppressing plant immune responsess. Promotes Phytophthora infection by suppressing the H(2)O(2) accumulation and callose deposition. May induce cell death by regulating expression of cell death-related genes. This chain is Crinkler effector protein 4, found in Phytophthora capsici.